Here is a 395-residue protein sequence, read N- to C-terminus: Zinc finger protein 385D (395 aa).

The segment at 80 to 110 (ISCNICQLRFNSDSQAAAHYKGTKHAKKLKA) adopts a Matrin-type 1 zinc-finger fold. Polar residues predominate over residues 169–193 (MTTEITSKVEKSPTTATGNSSCPST). A disordered region spans residues 169 to 194 (MTTEITSKVEKSPTTATGNSSCPSTE). 2 Matrin-type zinc fingers span residues 204–234 (LYCSLCKVAVNSASQLEAHNSGTKHKTMLEA) and 267–297 (FHCEICDVHVNSETQLKQHISSRRHKDRAAG). The disordered stretch occupies residues 282 to 309 (LKQHISSRRHKDRAAGKPPKPKYSPYNK).

The protein resides in the nucleus. The chain is Zinc finger protein 385D (ZNF385D) from Homo sapiens (Human).